The chain runs to 397 residues: Acetate kinase (397 aa).

Asparagine 8 contacts Mg(2+). Lysine 15 lines the ATP pocket. Substrate is bound at residue arginine 89. The active-site Proton donor/acceptor is aspartate 146. Residues 206–210 (HLGNG), 281–283 (DLR), and 329–333 (GIGEN) each bind ATP. Glutamate 382 lines the Mg(2+) pocket.

It belongs to the acetokinase family. In terms of assembly, homodimer. It depends on Mg(2+) as a cofactor. Requires Mn(2+) as cofactor.

Its subcellular location is the cytoplasm. The catalysed reaction is acetate + ATP = acetyl phosphate + ADP. The protein operates within metabolic intermediate biosynthesis; acetyl-CoA biosynthesis; acetyl-CoA from acetate: step 1/2. Catalyzes the formation of acetyl phosphate from acetate and ATP. Can also catalyze the reverse reaction. This chain is Acetate kinase, found in Geobacillus sp. (strain WCH70).